The following is a 54-amino-acid chain: Large ribosomal subunit protein bL32c (54 aa).

Residues 1–25 (MAVPKKRTSKAKKNSRKANWKRKAA) show a composition bias toward basic residues. The tract at residues 1-26 (MAVPKKRTSKAKKNSRKANWKRKAAK) is disordered.

This sequence belongs to the bacterial ribosomal protein bL32 family.

The protein resides in the plastid. It localises to the chloroplast. This Thalassiosira pseudonana (Marine diatom) protein is Large ribosomal subunit protein bL32c.